Reading from the N-terminus, the 132-residue chain is MSRKRTSPNRNVQIADQIQRDLSELIMREVKDPRIGIVTIQSVELTPDYAHAKVYFTTLTGDPAATQQALNHASGHLHNLLFKRLHIHTVPTLHFHYDQTIEKAVAMSRLIDEANATRAKDDDEADAPAKDD.

The protein belongs to the RbfA family. As to quaternary structure, monomer. Binds 30S ribosomal subunits, but not 50S ribosomal subunits or 70S ribosomes.

The protein localises to the cytoplasm. One of several proteins that assist in the late maturation steps of the functional core of the 30S ribosomal subunit. Associates with free 30S ribosomal subunits (but not with 30S subunits that are part of 70S ribosomes or polysomes). Required for efficient processing of 16S rRNA. May interact with the 5'-terminal helix region of 16S rRNA. This Burkholderia multivorans (strain ATCC 17616 / 249) protein is Ribosome-binding factor A.